Consider the following 444-residue polypeptide: Sonic hedgehog protein (444 aa).

A signal peptide spans 1–24 (MLVATQSLLLLSFICTLVTPPGLA). Residue cysteine 25 is the site of N-palmitoyl cysteine attachment. The Cardin-Weintraub signature appears at 33-39 (KRRHPKK). 7 residues coordinate Ca(2+): glutamate 90, glutamate 91, aspartate 96, threonine 126, glutamate 127, aspartate 130, and aspartate 132. Zn(2+) contacts are provided by histidine 141, aspartate 148, and histidine 183. A lipid anchor (Cholesterol glycine ester) is attached at glycine 198. Repeat copies occupy residues 386 to 393 (QVDLQSHH), 394 to 401 (QVDLQSHH), and 403 to 409 (VDLQSHH). Residues 386–409 (QVDLQSHHQVDLQSHHQVDLQSHH) form a 3 X 8 AA tandem repeats of Q-V-D-L-Q-S-H-H region.

It belongs to the hedgehog family. In terms of assembly, interacts with HHATL/GUP1 which negatively regulates HHAT-mediated palmitoylation of the SHH N-terminus. Interacts with BOC and CDON. Interacts with HHIP. Interacts with DISP1 via its cholesterol anchor. Interacts with SCUBE2. Multimer. Post-translationally, the C-terminal domain displays an autoproteolysis activity and a cholesterol transferase activity. Both activities result in the cleavage of the full-length protein and covalent attachment of a cholesterol moiety to the C-terminal of the newly generated N-terminal fragment (ShhN). Cholesterylation is required for the sonic hedgehog protein N-product targeting to lipid rafts and multimerization. ShhN is the active species in both local and long-range signaling, whereas the C-product (ShhC) is degraded in the reticulum endoplasmic. N-palmitoylation by HHAT of ShhN is required for sonic hedgehog protein N-product multimerization and full activity. It is a prerequisite for the membrane-proximal positioning and the subsequent shedding of this N-terminal peptide. In terms of processing, the lipidated N- and C-terminal peptides of ShhNp can be cleaved (shedding). The N-terminal palmitoylated peptide is cleaved at the Cardin-Weintraub (CW) motif site. The cleavage reduced the interactions with heparan sulfate. The cleavage is enhanced by SCUBE2. Strongly expressed in notochord and neural floor plate during embryogenesis. In tadpole, high expression is observed in pancreas/stomach, moderate expression in tail, and low expression in intestine, brain, and hind limb.

It localises to the endoplasmic reticulum membrane. Its subcellular location is the golgi apparatus membrane. The protein resides in the cell membrane. It carries out the reaction glycyl-L-cysteinyl-[protein] + cholesterol + H(+) = [protein]-C-terminal glycyl cholesterol ester + N-terminal L-cysteinyl-[protein]. Its function is as follows. The C-terminal part of the sonic hedgehog protein precursor displays an autoproteolysis and a cholesterol transferase activity. Both activities result in the cleavage of the full-length protein into two parts (ShhN and ShhC) followed by the covalent attachment of a cholesterol moiety to the C-terminal of the newly generated ShhN. Both activities occur in the endoplasmic reticulum. Once cleaved, ShhC is degraded in the endoplasmic reticulum. Functionally, the dually lipidated sonic hedgehog protein N-product (ShhNp) is a morphogen which is essential for a variety of patterning events during development. Induces ventral cell fate in the neural tube and somites. Involved in the patterning of the anterior-posterior axis of the developing limb bud. Essential for axon guidance. Binds to the patched (PTCH1) receptor, which functions in association with smoothened (SMO), to activate the transcription of target genes. In the absence of SHH, PTCH1 represses the constitutive signaling activity of SMO. This chain is Sonic hedgehog protein, found in Xenopus laevis (African clawed frog).